Consider the following 412-residue polypeptide: Tryptophan synthase beta chain 1 (412 aa).

Lys-103 carries the N6-(pyridoxal phosphate)lysine modification.

This sequence belongs to the TrpB family. As to quaternary structure, tetramer of two alpha and two beta chains. Pyridoxal 5'-phosphate is required as a cofactor.

It catalyses the reaction (1S,2R)-1-C-(indol-3-yl)glycerol 3-phosphate + L-serine = D-glyceraldehyde 3-phosphate + L-tryptophan + H2O. It participates in amino-acid biosynthesis; L-tryptophan biosynthesis; L-tryptophan from chorismate: step 5/5. Its function is as follows. The beta subunit is responsible for the synthesis of L-tryptophan from indole and L-serine. This is Tryptophan synthase beta chain 1 (trpB1) from Chlamydia caviae (strain ATCC VR-813 / DSM 19441 / 03DC25 / GPIC) (Chlamydophila caviae).